The sequence spans 498 residues: Glycerol kinase (498 aa).

Thr-12 is a binding site for ADP. Residues Thr-12, Thr-13, and Ser-14 each contribute to the ATP site. Thr-12 contacts sn-glycerol 3-phosphate. An ADP-binding site is contributed by Arg-16. Residues Arg-82, Glu-83, Tyr-134, and Asp-241 each contribute to the sn-glycerol 3-phosphate site. 5 residues coordinate glycerol: Arg-82, Glu-83, Tyr-134, Asp-241, and Gln-242. ADP is bound by residues Thr-263 and Gly-310. ATP is bound by residues Thr-263, Gly-310, Gln-314, and Gly-411. Residues Gly-411 and Asn-415 each coordinate ADP.

This sequence belongs to the FGGY kinase family.

It catalyses the reaction glycerol + ATP = sn-glycerol 3-phosphate + ADP + H(+). It functions in the pathway polyol metabolism; glycerol degradation via glycerol kinase pathway; sn-glycerol 3-phosphate from glycerol: step 1/1. Its activity is regulated as follows. Inhibited by fructose 1,6-bisphosphate (FBP). Key enzyme in the regulation of glycerol uptake and metabolism. Catalyzes the phosphorylation of glycerol to yield sn-glycerol 3-phosphate. This chain is Glycerol kinase, found in Janthinobacterium sp. (strain Marseille) (Minibacterium massiliensis).